The chain runs to 936 residues: DNA topoisomerase 1 (936 aa).

Residues R15–T139 enclose the Toprim domain. The Mg(2+) site is built by E21 and D108. Residues D154 to E611 enclose the Topo IA-type catalytic domain. The segment at S188–Q193 is interaction with DNA. Y339 serves as the catalytic O-(5'-phospho-DNA)-tyrosine intermediate. 4 disordered regions span residues L661 to D688, V732 to R767, K841 to A884, and L903 to A936. Residues R910 to A936 are compositionally biased toward basic residues.

This sequence belongs to the type IA topoisomerase family. In terms of assembly, monomer. Mg(2+) is required as a cofactor.

It catalyses the reaction ATP-independent breakage of single-stranded DNA, followed by passage and rejoining.. In terms of biological role, releases the supercoiling and torsional tension of DNA, which is introduced during the DNA replication and transcription, by transiently cleaving and rejoining one strand of the DNA duplex. Introduces a single-strand break via transesterification at a target site in duplex DNA. The scissile phosphodiester is attacked by the catalytic tyrosine of the enzyme, resulting in the formation of a DNA-(5'-phosphotyrosyl)-enzyme intermediate and the expulsion of a 3'-OH DNA strand. The free DNA strand then undergoes passage around the unbroken strand, thus removing DNA supercoils. Finally, in the religation step, the DNA 3'-OH attacks the covalent intermediate to expel the active-site tyrosine and restore the DNA phosphodiester backbone. Its function is as follows. Relaxes negatively (but not positively) supercoiled DNA, concatanates and knots circular ssDNA at 52 but not 37 degrees Celsius. Preferentially nicks supercoiled DNA at C(G/T)CTT, cutting between the TT residues, binds ss and dsDNA with the recognition site. In Mycolicibacterium smegmatis (strain ATCC 700084 / mc(2)155) (Mycobacterium smegmatis), this protein is DNA topoisomerase 1.